The chain runs to 144 residues: 3-dehydroquinate dehydratase (144 aa).

Tyr24 (proton acceptor) is an active-site residue. Substrate contacts are provided by Asn76, His82, and Asp89. His102 acts as the Proton donor in catalysis. Substrate-binding positions include 103–104 (LS) and Arg113.

It belongs to the type-II 3-dehydroquinase family. In terms of assembly, homododecamer.

The catalysed reaction is 3-dehydroquinate = 3-dehydroshikimate + H2O. It functions in the pathway metabolic intermediate biosynthesis; chorismate biosynthesis; chorismate from D-erythrose 4-phosphate and phosphoenolpyruvate: step 3/7. In terms of biological role, catalyzes a trans-dehydration via an enolate intermediate. The sequence is that of 3-dehydroquinate dehydratase from Bordetella avium (strain 197N).